We begin with the raw amino-acid sequence, 411 residues long: MSAVSESVLSLSRYYLPVYRPCQVVLVRGQGSRVWDEQGRDYLDLAAGIAVCCLGHCDPDLVAALVEQAGRLWHTSNVFYSEPSLRLAQELVDVSRFAERVFLCSSGTEANEAAIKLVRKWAAAQGRLPEHRTIVTFHGSFHGRTLAAVTATAQPKYQEGYEPLPGGFRYVDFNHIEALEAAMVGGDVAAVMLEPIQGEGGVMPVVSGYLAQVRALCDRYGALLVLDEIQCGMGRTGTLFAYWQEEVVPDIVTLAKGLGGGFPIGAMLAGPKVAEVMQFGAHGTTFGGNPMAAAVARVALRKLASVEIAANVQRQSVALRAGLEEISEAFGGVFTQVRGRGLMLGAVLAPLYAGQASAILEVAVEHGVLLLQAGPDVLRFVPALNVSDEELADGLVRLRAALGDYVSRFGG.

Pyridoxal 5'-phosphate is bound by residues 107–108 (GT) and phenylalanine 141. A N(2)-acetyl-L-ornithine-binding site is contributed by arginine 144. Residue 227-230 (DEIQ) participates in pyridoxal 5'-phosphate binding. Lysine 256 carries the N6-(pyridoxal phosphate)lysine modification. Residue threonine 284 coordinates N(2)-acetyl-L-ornithine. Residue threonine 285 participates in pyridoxal 5'-phosphate binding.

Belongs to the class-III pyridoxal-phosphate-dependent aminotransferase family. ArgD subfamily. In terms of assembly, homodimer. Pyridoxal 5'-phosphate serves as cofactor.

The protein resides in the cytoplasm. It catalyses the reaction N(2)-acetyl-L-ornithine + 2-oxoglutarate = N-acetyl-L-glutamate 5-semialdehyde + L-glutamate. It participates in amino-acid biosynthesis; L-arginine biosynthesis; N(2)-acetyl-L-ornithine from L-glutamate: step 4/4. The chain is Acetylornithine aminotransferase from Xylella fastidiosa (strain 9a5c).